The sequence spans 263 residues: Endonuclease 8 (263 aa).

The active-site Schiff-base intermediate with DNA is the Pro-2. Glu-3 acts as the Proton donor in catalysis. Lys-53 acts as the Proton donor; for beta-elimination activity in catalysis. DNA-binding residues include Gln-70, Arg-125, and Asn-169. Residues 229–263 (KVFHRDGEACERCGGIIEKTTLSSRPFYWCAHCQK) form an FPG-type zinc finger. Arg-253 serves as the catalytic Proton donor; for delta-elimination activity.

Belongs to the FPG family. The cofactor is Zn(2+).

It carries out the reaction 2'-deoxyribonucleotide-(2'-deoxyribose 5'-phosphate)-2'-deoxyribonucleotide-DNA = a 3'-end 2'-deoxyribonucleotide-(2,3-dehydro-2,3-deoxyribose 5'-phosphate)-DNA + a 5'-end 5'-phospho-2'-deoxyribonucleoside-DNA + H(+). Functionally, involved in base excision repair of DNA damaged by oxidation or by mutagenic agents. Acts as a DNA glycosylase that recognizes and removes damaged bases. Has a preference for oxidized pyrimidines, such as thymine glycol, 5,6-dihydrouracil and 5,6-dihydrothymine. Has AP (apurinic/apyrimidinic) lyase activity and introduces nicks in the DNA strand. Cleaves the DNA backbone by beta-delta elimination to generate a single-strand break at the site of the removed base with both 3'- and 5'-phosphates. The protein is Endonuclease 8 of Salmonella typhi.